The sequence spans 297 residues: Ribosomal RNA small subunit methyltransferase A (297 aa).

S-adenosyl-L-methionine is bound by residues N31, L33, G58, E79, D104, and N129.

It belongs to the class I-like SAM-binding methyltransferase superfamily. rRNA adenine N(6)-methyltransferase family. RsmA subfamily.

Its subcellular location is the cytoplasm. It carries out the reaction adenosine(1518)/adenosine(1519) in 16S rRNA + 4 S-adenosyl-L-methionine = N(6)-dimethyladenosine(1518)/N(6)-dimethyladenosine(1519) in 16S rRNA + 4 S-adenosyl-L-homocysteine + 4 H(+). In terms of biological role, specifically dimethylates two adjacent adenosines (A1518 and A1519) in the loop of a conserved hairpin near the 3'-end of 16S rRNA in the 30S particle. May play a critical role in biogenesis of 30S subunits. This chain is Ribosomal RNA small subunit methyltransferase A, found in Staphylococcus aureus (strain bovine RF122 / ET3-1).